The following is a 331-amino-acid chain: MSGRNRGPPPPSMKGGSYSGLQAPVHQPPFVRGLGGGPVPPPPHPSMIDDSREPQFRVDARGLPPQFSILEDRLAAQNQDVQGLLADNQRLAATHVALKQELEVAQHELQRIMHYIDSLRAEEEIMMREMYDKSMRSEMELREVDAMRAEIQKIRADIKEFTSGRQELTSQVHLMTQDLARLTADLQQIPTLTAEIENTKQELQRARAAIDYEKKGYAENYEHGKIMEHKLVAMARELEKLRAEIANSETSAYANGPVGNPGGVAYGGGYGNPEAGYPVNPYQPNYTMNPAQTGVVGYYPPPYGPQAAWAGGYDPQQQQQQQPPPQGQGHR.

Residues 1-51 form a disordered region; that stretch reads MSGRNRGPPPPSMKGGSYSGLQAPVHQPPFVRGLGGGPVPPPPHPSMIDDS. The stretch at 69-252 forms a coiled coil; that stretch reads ILEDRLAAQN…AEIANSETSA (184 aa). The segment covering 306–321 has biased composition (low complexity); sequence QAAWAGGYDPQQQQQQ. The interval 306–331 is disordered; sequence QAAWAGGYDPQQQQQQQPPPQGQGHR. The span at 322 to 331 shows a compositional bias: pro residues; that stretch reads QPPPQGQGHR.

Belongs to the FLX family. As to quaternary structure, interacts with FRI.

Functionally, has no transcriptional activation activity. The sequence is that of Protein FLX-like 1 (FLXL1) from Arabidopsis thaliana (Mouse-ear cress).